Here is a 73-residue protein sequence, read N- to C-terminus: Small ribosomal subunit protein bS18c (73 aa).

It belongs to the bacterial ribosomal protein bS18 family. As to quaternary structure, part of the 30S ribosomal subunit.

The protein resides in the plastid. It localises to the chloroplast. The chain is Small ribosomal subunit protein bS18c from Rhodomonas salina (Cryptomonas salina).